Consider the following 442-residue polypeptide: D-serine dehydratase (442 aa).

Lys118 bears the N6-(pyridoxal phosphate)lysine mark.

It belongs to the serine/threonine dehydratase family. DsdA subfamily. Monomer. It depends on pyridoxal 5'-phosphate as a cofactor.

The enzyme catalyses D-serine = pyruvate + NH4(+). The protein is D-serine dehydratase of Escherichia coli (strain 55989 / EAEC).